Consider the following 598-residue polypeptide: MANDTRQVVQGVQEMTPSEAFVETMVANGVTEIFGIMGSAFMDAMDIFAPAGIKLIPVVHEQGAAHMADGFARVSGRTGVVIGQNGPGISNCVTAIAAAYWAHTPVVIVTPEAGTTGIGLGGFQEARQLPMFQEFTKYQGHVTHPARMAEYTARCFARARDEMGPAQLNIPRDYFYGKIKCEIPLPQPLDRGPGGAQSLDAAARLLAEAKFPVIISGGGVVMGDAVEECKALAERLGAPVVNSYLHNDSFPASHPLWCGPLGYQGSKAAMKLLADADVVLALGTRLGPFGTLPQHGLDYWPKNARIIQVDADSKMLGLVKKITVGVCGDAKASAAEISRRIDGMKLACDANKAERAARIQAEKDAWEQELTDWTHERDPFSLDMIEEQSKEEGNWLHPRQVLRELEKAMPEDVMVSTDIGNINSVANSYLRFEKPRSFFAAMSWGNCGYAFPTIIGAKVAAPHRPAVSYAGDGAWGMSMSEIMTCVRHDIPVTAVVFHNRQWGAEKKNQVDFYNRRFVAGELESESFAGIARAMGAEGVVVDRIEDVGPALKKAIDAQMNDRKTTVIEIMCTRELGDPFRRDALSKPVRLLEKYRDYT.

The protein belongs to the TPP enzyme family. In terms of assembly, homotetramer. It depends on Mg(2+) as a cofactor. Thiamine diphosphate serves as cofactor.

The protein resides in the cytoplasm. It carries out the reaction acetyl phosphate + sulfite + H(+) = sulfoacetaldehyde + phosphate. It functions in the pathway organosulfur degradation; taurine degradation via aerobic pathway; acetyl phosphate and sulfite from taurine: step 2/2. In Castellaniella defragrans (Alcaligenes defragrans), this protein is Sulfoacetaldehyde acetyltransferase.